The chain runs to 533 residues: Probable bifunctional tRNA threonylcarbamoyladenosine biosynthesis protein (533 aa).

The kae1 stretch occupies residues 1 to 328; the sequence is MRILGIEGTA…FRPDAVTVTW (328 aa). Residues H112 and H116 each contribute to the Fe cation site. L-threonylcarbamoyladenylate contacts are provided by residues 133–137, D165, G178, E182, and N261; that span reads NASGA. Position 289 (D289) interacts with Fe cation. The Protein kinase domain occupies 339 to 533; that stretch reads PATLDKTPVR…RDIESRGRYH (195 aa). Residues 347–354 and K363 each bind ATP; that span reads VRGAEAIV. The Proton acceptor; for kinase activity role is filled by D452.

This sequence in the N-terminal section; belongs to the KAE1 / TsaD family. In the C-terminal section; belongs to the protein kinase superfamily. Tyr protein kinase family. BUD32 subfamily. As to quaternary structure, component of the KEOPS complex that consists of Kae1, Bud32, Cgi121 and Pcc1; the whole complex dimerizes. Fe(2+) is required as a cofactor.

Its subcellular location is the cytoplasm. It carries out the reaction L-seryl-[protein] + ATP = O-phospho-L-seryl-[protein] + ADP + H(+). It catalyses the reaction L-threonyl-[protein] + ATP = O-phospho-L-threonyl-[protein] + ADP + H(+). The enzyme catalyses L-threonylcarbamoyladenylate + adenosine(37) in tRNA = N(6)-L-threonylcarbamoyladenosine(37) in tRNA + AMP + H(+). Required for the formation of a threonylcarbamoyl group on adenosine at position 37 (t(6)A37) in tRNAs that read codons beginning with adenine. Is a component of the KEOPS complex that is probably involved in the transfer of the threonylcarbamoyl moiety of threonylcarbamoyl-AMP (TC-AMP) to the N6 group of A37. The Kae1 domain likely plays a direct catalytic role in this reaction. The Bud32 domain probably displays kinase activity that regulates Kae1 function. The protein is Probable bifunctional tRNA threonylcarbamoyladenosine biosynthesis protein of Haloquadratum walsbyi (strain DSM 16790 / HBSQ001).